The following is a 415-amino-acid chain: uncharacterized protein (415 aa).

Residues 179–199 (SPAPCSPAPGSPPPPAPPAAP) are compositionally biased toward pro residues. A disordered region spans residues 179–200 (SPAPCSPAPGSPPPPAPPAAPA).

This sequence belongs to the herpesviridae BTRF1 family.

This is an uncharacterized protein from Equus caballus (Horse).